The sequence spans 439 residues: Ornithine aminotransferase, mitochondrial (439 aa).

The transit peptide at 1-25 directs the protein to the mitochondrion; sequence MLSKLARLQTVAGLGLGVHSSVASA. Residues Lys-49 and Lys-66 each carry the N6-acetyllysine modification. Lys-102 carries the N6-succinyllysine modification. Lys-107 carries the post-translational modification N6-acetyllysine; alternate. Lys-107 bears the N6-succinyllysine; alternate mark. An N6-(pyridoxal phosphate)lysine modification is found at Lys-292. N6-acetyllysine; alternate is present on Lys-362. At Lys-362 the chain carries N6-succinyllysine; alternate. An N6-acetyllysine mark is found at Lys-386 and Lys-392. The residue at position 405 (Lys-405) is an N6-acetyllysine; alternate. Lys-405 bears the N6-succinyllysine; alternate mark. N6-acetyllysine is present on Lys-421.

It belongs to the class-III pyridoxal-phosphate-dependent aminotransferase family. As to quaternary structure, homohexamer. Pyridoxal 5'-phosphate is required as a cofactor.

Its subcellular location is the mitochondrion matrix. The enzyme catalyses L-ornithine + 2-oxoglutarate = L-glutamate 5-semialdehyde + L-glutamate. Its pathway is amino-acid biosynthesis; L-proline biosynthesis; L-glutamate 5-semialdehyde from L-ornithine: step 1/1. Its function is as follows. Catalyzes the reversible interconversion of L-ornithine and 2-oxoglutarate to L-glutamate semialdehyde and L-glutamate. This Bos taurus (Bovine) protein is Ornithine aminotransferase, mitochondrial (OAT).